A 67-amino-acid polypeptide reads, in one-letter code: Large ribosomal subunit protein uL29 (67 aa).

It belongs to the universal ribosomal protein uL29 family.

This Heliobacterium modesticaldum (strain ATCC 51547 / Ice1) protein is Large ribosomal subunit protein uL29.